Here is a 223-residue protein sequence, read N- to C-terminus: Octanoyltransferase (223 aa).

The BPL/LPL catalytic domain maps to Gly35–Arg214. Residues Arg74–His81, Ala145–Gly147, and Gly158–Ser160 contribute to the substrate site. The Acyl-thioester intermediate role is filled by Cys176.

The protein belongs to the LipB family.

It localises to the cytoplasm. The enzyme catalyses octanoyl-[ACP] + L-lysyl-[protein] = N(6)-octanoyl-L-lysyl-[protein] + holo-[ACP] + H(+). It participates in protein modification; protein lipoylation via endogenous pathway; protein N(6)-(lipoyl)lysine from octanoyl-[acyl-carrier-protein]: step 1/2. Functionally, catalyzes the transfer of endogenously produced octanoic acid from octanoyl-acyl-carrier-protein onto the lipoyl domains of lipoate-dependent enzymes. Lipoyl-ACP can also act as a substrate although octanoyl-ACP is likely to be the physiological substrate. The polypeptide is Octanoyltransferase (Rhizorhabdus wittichii (strain DSM 6014 / CCUG 31198 / JCM 15750 / NBRC 105917 / EY 4224 / RW1) (Sphingomonas wittichii)).